Consider the following 318-residue polypeptide: Death effector domain-containing protein (318 aa).

A DED domain is found at 25-103; sequence SLHRMFDIVG…RHDLLPYVTL (79 aa). Residues 128-191 form a disordered region; the sequence is PRALSDPEPR…SVTPDPKEKQ (64 aa).

In terms of assembly, interacts with CASP8, CASP10, KRT8, KRT18, CASP3 and FADD. Homodimerizes and heterodimerizes with DEDD2. Exists predominantly in a mono- or diubiquitinated form. In terms of tissue distribution, ubiquitously expressed.

Its subcellular location is the cytoplasm. It localises to the nucleus. The protein localises to the nucleolus. Functionally, a scaffold protein that directs CASP3 to certain substrates and facilitates their ordered degradation during apoptosis. May also play a role in mediating CASP3 cleavage of KRT18. Regulates degradation of intermediate filaments during apoptosis. May play a role in the general transcription machinery in the nucleus and might be an important regulator of the activity of GTF3C3. Inhibits DNA transcription in vitro. This chain is Death effector domain-containing protein (Dedd), found in Mus musculus (Mouse).